We begin with the raw amino-acid sequence, 190 residues long: Large ribosomal subunit protein bL25 (190 aa).

The disordered stretch occupies residues 1-20 (MSEQKTLSVQKRDNLGKGAN).

Belongs to the bacterial ribosomal protein bL25 family. CTC subfamily. As to quaternary structure, part of the 50S ribosomal subunit; part of the 5S rRNA/L5/L18/L25 subcomplex. Contacts the 5S rRNA. Binds to the 5S rRNA independently of L5 and L18.

In terms of biological role, this is one of the proteins that binds to the 5S RNA in the ribosome where it forms part of the central protuberance. The polypeptide is Large ribosomal subunit protein bL25 (Nitratidesulfovibrio vulgaris (strain ATCC 29579 / DSM 644 / CCUG 34227 / NCIMB 8303 / VKM B-1760 / Hildenborough) (Desulfovibrio vulgaris)).